Consider the following 337-residue polypeptide: Endochitinase 37 (337 aa).

The N-terminal stretch at 1–25 is a signal peptide; the sequence is MTRLLDASFLLLPVIASTLFGTASA. One can recognise a GH18 domain in the interval 38-337; sequence KVLQGYWENW…GSKNWTFGDN (300 aa). Glu160 acts as the Proton donor in catalysis. Asn331 is a glycosylation site (N-linked (GlcNAc...) asparagine).

Belongs to the glycosyl hydrolase 18 family. Chitinase class V subfamily. As to quaternary structure, monomer.

The protein resides in the secreted. The catalysed reaction is Random endo-hydrolysis of N-acetyl-beta-D-glucosaminide (1-&gt;4)-beta-linkages in chitin and chitodextrins.. In terms of biological role, secreted chitinase involved in the degradation of chitin, a component of the cell walls of fungi and exoskeletal elements of some animals (including worms and arthropods). Plays a morphogenetic role during apical growth, cell division and differentiation (cell wall morphogenesis). May be involved in the degradation and further assimilation of phytopathogenic fungi, namely mycoparasitism, the major mechanism accounting for the antagonistic activity against phytopathogenic fungi displayed by Trichoderma. In Trichoderma harzianum (Hypocrea lixii), this protein is Endochitinase 37 (chit37).